The following is a 256-amino-acid chain: MLHIADKTFDSHLFTGTGKFASSQLMVESIRASGSQLVTLAMKRVDLRQHNDAILEPLIAAGVTLLPNTSGAKTAEEAIFAAHLAREALGTNWLKLEIHPDARWLLPDPIETLKAAETLVQQGFVVLPYCGADPVLCKRLEEVGCAAVMPLGAPIGSNQGLETRAMLEIIIQQATVPVVVDAGIGVPSHAAQALEMGADAVLVNTAIAVADDPVNMAKAFRLAVEAGLLARQSGPGSRSHFAHATSPLTGFLEASA.

Lys-95 acts as the Schiff-base intermediate with DXP in catalysis. Residues Gly-156, 182–183 (AG), and 204–205 (NT) each bind 1-deoxy-D-xylulose 5-phosphate.

Belongs to the ThiG family. Homotetramer. Forms heterodimers with either ThiH or ThiS.

It is found in the cytoplasm. The catalysed reaction is [ThiS sulfur-carrier protein]-C-terminal-Gly-aminoethanethioate + 2-iminoacetate + 1-deoxy-D-xylulose 5-phosphate = [ThiS sulfur-carrier protein]-C-terminal Gly-Gly + 2-[(2R,5Z)-2-carboxy-4-methylthiazol-5(2H)-ylidene]ethyl phosphate + 2 H2O + H(+). Its pathway is cofactor biosynthesis; thiamine diphosphate biosynthesis. Functionally, catalyzes the rearrangement of 1-deoxy-D-xylulose 5-phosphate (DXP) to produce the thiazole phosphate moiety of thiamine. Sulfur is provided by the thiocarboxylate moiety of the carrier protein ThiS. In vitro, sulfur can be provided by H(2)S. This is Thiazole synthase from Escherichia coli O127:H6 (strain E2348/69 / EPEC).